A 521-amino-acid polypeptide reads, in one-letter code: MDELLLDLFHKLTSGRQLAAGNGLCGISHKEQEVWKPGHNILVKMRKEDKSLVWLIHSTLARYTQVTNFLGTSRSSVTRCKPGANCPSSHSGISRQLSPLSVTEDSSAPILELQNQGSSGVCGHRVERQNRSADDGTQTHSENSSQENRIKARCLSCTSMVLKGIWGLLIILSVSSSWVGTTQIVKITYKNFYCPFFMTWFSTNWNIMFFPVYYSGHLATAQEKQSPMKKFRECSRIFGEDGLTLKLFLKRTAPFSILWTLTNYLYLLALKKLTATDVSALFCCNKAFVFLLSWIVLKDRFMGVRIVAAIMAITGIVMMAYADNFHADSIIGVAFAVGSASTSALYKVLFKMFLGSANFGEAAHFVSTLGFFNLIFISFTPVILYFTKVEHWSSFAALPWGCLCGMAGLWLAFNILVNVGVVLTYPILISIGTVLSVPGNAAVDLLKQEVIFNVVRLAATIIICIGFLLMLLPEEWDEITLRFINSLKEKKSEEHVDDVTDPSIHLRGRGRANGTVSIPLA.

The next 10 membrane-spanning stretches (helical) occupy residues 160-180 (MVLKGIWGLLIILSVSSSWVG), 192-212 (FYCPFFMTWFSTNWNIMFFPV), 248-266 (FLKRTAPFSILWTLTNYLY), 277-297 (DVSALFCCNKAFVFLLSWIVL), 301-321 (FMGVRIVAAIMAITGIVMMAY), 330-350 (IIGVAFAVGSASTSALYKVLF), 365-385 (FVSTLGFFNLIFISFTPVILY), 395-417 (FAALPWGCLCGMAGLWLAFNILV), 419-441 (VGVVLTYPILISIGTVLSVPGNA), and 450-470 (VIFNVVRLAATIIICIGFLLM). Positions 261 to 321 (LTNYLYLLAL…AITGIVMMAY (61 aa)) constitute an EamA domain.

It belongs to the SLC35F solute transporter family.

The protein resides in the membrane. Its function is as follows. Putative solute transporter. The polypeptide is Solute carrier family 35 member F4 (SLC35F4) (Homo sapiens (Human)).